Reading from the N-terminus, the 220-residue chain is Ribosomal RNA small subunit methyltransferase G (220 aa).

S-adenosyl-L-methionine contacts are provided by residues Gly82, Leu87, 137–138 (VE), and Arg152.

It belongs to the methyltransferase superfamily. RNA methyltransferase RsmG family.

The protein resides in the cytoplasm. The enzyme catalyses guanosine(527) in 16S rRNA + S-adenosyl-L-methionine = N(7)-methylguanosine(527) in 16S rRNA + S-adenosyl-L-homocysteine. Its function is as follows. Specifically methylates the N7 position of guanine in position 527 of 16S rRNA. This is Ribosomal RNA small subunit methyltransferase G from Janthinobacterium sp. (strain Marseille) (Minibacterium massiliensis).